Here is a 106-residue protein sequence, read N- to C-terminus: Large ribosomal subunit protein P2 (106 aa).

The disordered stretch occupies residues 79–106; it reads GAGAVAEAKKEEPEEEEADDDMGFGLFD. The segment covering 91–100 has biased composition (acidic residues); sequence PEEEEADDDM.

Belongs to the eukaryotic ribosomal protein P1/P2 family. P1 and P2 exist as dimers at the large ribosomal subunit. Phosphorylated.

Plays an important role in the elongation step of protein synthesis. The polypeptide is Large ribosomal subunit protein P2 (LIP) (Leishmania infantum).